A 995-amino-acid polypeptide reads, in one-letter code: Zinc finger protein ZFPM1 (995 aa).

The segment covering 1–14 (MSRRKQSNPRQIKR) has biased composition (basic residues). Positions 1 to 103 (MSRRKQSNPR…EAAMASPWSG (103 aa)) are disordered. Basic and acidic residues predominate over residues 15 to 36 (SLRDMEAGEEAKAMDSSPKEQE). Acidic residues-rich tracts occupy residues 67 to 78 (SPEDPEDMEGQE) and 86 to 95 (EEKEEKEEEA). Phosphoserine occurs at positions 99 and 143. The segment at 249 to 282 (VINKDVFPCKDCGIWYRSERNLQAHLLYYCASRQ) adopts a CCHC FOG-type 1 zinc-finger fold. Positions 257, 260, 273, and 278 each coordinate Zn(2+). Phosphoserine is present on S286. 3 C2H2-type zinc fingers span residues 303 to 327 (RVCP…MRSH), 333 to 355 (FVCL…LKVH), and 361 to 384 (GVCH…VTNH). Positions 343-354 (TTKANCERHLKV) are interaction with TACC3. Phosphoserine is present on residues S397, S497, and S500. The disordered stretch occupies residues 424–526 (PLVPADKAPT…SSPGPGELTM (103 aa)). Over residues 509 to 525 (ELSSPTPGSSPGPGELT) the composition is skewed to low complexity. The CCHC FOG-type 2 zinc-finger motif lies at 584-617 (FSGTKGATCFECEITFNNINNFYVHKRLYCSGRR). Zn(2+) contacts are provided by C592, C595, H608, and C613. The interval 616-694 (RRAPEDPPTV…SVDDAEDDPS (79 aa)) is disordered. The span at 630 to 652 (AATGPARAPAGAAAEPDPSRSSP) shows a compositional bias: low complexity. S651 and S684 each carry phosphoserine. A CCHC FOG-type 3 zinc finger spans residues 690–723 (EDDPSRTLCEACNIRFSRHETYTVHKRYYCASRH). Residues C698, C701, H714, and C719 each contribute to the Zn(2+) site. Residues 721–827 (SRHDPPPRRP…PRRQSPDAPT (107 aa)) are disordered. 2 stretches are compositionally biased toward pro residues: residues 728–740 (RRPP…PGPA) and 764–779 (GAPP…PVVP). The span at 785-800 (LPSSPRPGSASAGPAP) shows a compositional bias: low complexity. At S803 the chain carries Phosphoserine. An interaction with CTBP2 region spans residues 811 to 817 (PIDLSKR). S822 carries the phosphoserine modification. Residues 830–863 (PALADYHECTACRVSFHSLEAYLAHKKYSCPAAP) form a CCHC FOG-type 4 zinc finger. Residues C838, C841, H854, and C859 each coordinate Zn(2+). A C2H2-type 4 zinc finger spans residues 868–891 (ALCPYCPPNGRVRGDLVEHLRQAH). The disordered stretch occupies residues 892–960 (GLQVAKPAAS…APAPAPGGGG (69 aa)). The span at 908 to 922 (TPAERAPRDSPDGRA) shows a compositional bias: basic and acidic residues. S925 and S927 each carry phosphoserine. Residues 957–990 (GGGGGHRYCRLCNIRFSSLSTFIAHKKYYCSSHA) form a CCHC FOG-type 5 zinc finger. Residues C965, C968, H981, and C986 each contribute to the Zn(2+) site.

This sequence belongs to the FOG (Friend of GATA) family. Interacts with the N-terminal zinc-finger of GATA1, GATA2 and GATA3. Interacts with corepressor CTBP2; this interaction is however not essential for corepressor activity in erythropoiesis. Interacts with TACC3. As to expression, mainly expressed in hematopoietic tissues. Expressed in the spleen, a primary site of hematopoiesis in the adult mouse, as well as in the liver and testis, but not in the heart, brain, lung, kidney, or skeletal muscle. Among hematopoietic cell lines, it is strongly expressed in erythroid and megakaryocytic cell lines. Expressed at low level in several lymphoid and early myeloid cell lines. Not expressed in mast cell and macrophage lines. Expressed in the heart, where it colocalizes with GATA4, GATA5 and GATA6.

The protein localises to the nucleus. Transcription regulator that plays an essential role in erythroid and megakaryocytic cell differentiation. Essential cofactor that acts via the formation of a heterodimer with transcription factors of the GATA family GATA1, GATA2 and GATA3. Such heterodimer can both activate or repress transcriptional activity, depending on the cell and promoter context. The heterodimer formed with GATA proteins is essential to activate expression of genes such as NFE2, ITGA2B, alpha- and beta-globin, while it represses expression of KLF1. May be involved in regulation of some genes in gonads. May also be involved in cardiac development, in a non-redundant way with ZFPM2/FOG2. This chain is Zinc finger protein ZFPM1 (Zfpm1), found in Mus musculus (Mouse).